Here is a 404-residue protein sequence, read N- to C-terminus: Cytoplasmic tRNA 2-thiolation protein 2 (404 aa).

The protein belongs to the CTU2/NCS2 family.

The protein localises to the cytoplasm. The protein operates within tRNA modification; 5-methoxycarbonylmethyl-2-thiouridine-tRNA biosynthesis. Plays a central role in 2-thiolation of mcm(5)S(2)U at tRNA wobble positions of tRNA(Lys), tRNA(Glu) and tRNA(Gln). May act by forming a heterodimer with NCS6/CTU1 that ligates sulfur from thiocarboxylated URM1 onto the uridine of tRNAs at wobble position. The chain is Cytoplasmic tRNA 2-thiolation protein 2 from Drosophila yakuba (Fruit fly).